A 338-amino-acid polypeptide reads, in one-letter code: Plasminogen (338 aa).

The region spanning 9–88 (CMLGIGKGYQ…LFDYCDVPQC (80 aa)) is the Kringle 5 domain. 9 disulfide bridges follow: Cys-9–Cys-88, Cys-30–Cys-71, Cys-59–Cys-83, Cys-95–Cys-213, Cys-105–Cys-113, Cys-135–Cys-151, Cys-227–Cys-294, Cys-257–Cys-273, and Cys-284–Cys-312. A Peptidase S1 domain is found at 109-336 (IVGGCVAIAH…FINWIERIMQ (228 aa)). Position 125 is a phosphoserine (Ser-125). Residues His-150 and Asp-193 each act as charge relay system in the active site. Ser-288 serves as the catalytic Charge relay system.

This sequence belongs to the peptidase S1 family. Plasminogen subfamily. In terms of assembly, interacts with CSPG4 and AMOT. Interacts (via the Kringle domains) with HRG; the interaction tethers PLG to the cell surface and enhances its activation. Interacts (via Kringle 4 domain) with ADA; the interaction stimulates PLG activation when in complex with DPP4. Angiostatin: Interacts with ATP5F1A; the interaction inhibits most of the angiogenic effects of angiostatin.

It is found in the secreted. It carries out the reaction Preferential cleavage: Lys-|-Xaa &gt; Arg-|-Xaa, higher selectivity than trypsin. Converts fibrin into soluble products.. Its activity is regulated as follows. Converted into plasmin by plasminogen activators, both plasminogen and its activator being bound to fibrin. Activated with catalytic amounts of streptokinase. Functionally, plasmin dissolves the fibrin of blood clots and acts as a proteolytic factor in a variety of other processes including embryonic development, tissue remodeling, tumor invasion, and inflammation. In ovulation, weakens the walls of the Graafian follicle. It activates the urokinase-type plasminogen activator, collagenases and several complement zymogens, such as C1, C4 and C5. Cleavage of fibronectin and laminin leads to cell detachment and apoptosis. Also cleaves fibrin, thrombospondin and von Willebrand factor. Its role in tissue remodeling and tumor invasion may be modulated by CSPG4. Binds to cells. This is Plasminogen (PLG) from Equus caballus (Horse).